The primary structure comprises 329 residues: Biotin synthase (329 aa).

The 231-residue stretch at 48–278 (FLGNGVDLCS…TKKIAVCGGR (231 aa)) folds into the Radical SAM core domain. Positions 66, 70, and 73 each coordinate [4Fe-4S] cluster. Positions 143 and 203 each coordinate [2Fe-2S] cluster.

It belongs to the radical SAM superfamily. Biotin synthase family. Homodimer. [4Fe-4S] cluster serves as cofactor. [2Fe-2S] cluster is required as a cofactor.

It catalyses the reaction (4R,5S)-dethiobiotin + (sulfur carrier)-SH + 2 reduced [2Fe-2S]-[ferredoxin] + 2 S-adenosyl-L-methionine = (sulfur carrier)-H + biotin + 2 5'-deoxyadenosine + 2 L-methionine + 2 oxidized [2Fe-2S]-[ferredoxin]. It functions in the pathway cofactor biosynthesis; biotin biosynthesis; biotin from 7,8-diaminononanoate: step 2/2. Catalyzes the conversion of dethiobiotin (DTB) to biotin by the insertion of a sulfur atom into dethiobiotin via a radical-based mechanism. The sequence is that of Biotin synthase from Geobacter metallireducens (strain ATCC 53774 / DSM 7210 / GS-15).